Reading from the N-terminus, the 626-residue chain is Phosphomethylpyrimidine synthase (626 aa).

Positions 1 to 22 (MTKQEKAINLSESAQVDQQSVQ) are disordered. Positions 10–22 (LSESAQVDQQSVQ) are enriched in polar residues. Substrate-binding positions include asparagine 232, methionine 261, tyrosine 290, histidine 326, 346 to 348 (SRG), 387 to 390 (DGLR), and glutamate 426. Histidine 430 is a binding site for Zn(2+). Position 453 (tyrosine 453) interacts with substrate. Histidine 494 is a binding site for Zn(2+). [4Fe-4S] cluster-binding residues include cysteine 574, cysteine 577, and cysteine 582.

Belongs to the ThiC family. As to quaternary structure, homodimer. [4Fe-4S] cluster serves as cofactor.

The catalysed reaction is 5-amino-1-(5-phospho-beta-D-ribosyl)imidazole + S-adenosyl-L-methionine = 4-amino-2-methyl-5-(phosphooxymethyl)pyrimidine + CO + 5'-deoxyadenosine + formate + L-methionine + 3 H(+). It functions in the pathway cofactor biosynthesis; thiamine diphosphate biosynthesis. Its function is as follows. Catalyzes the synthesis of the hydroxymethylpyrimidine phosphate (HMP-P) moiety of thiamine from aminoimidazole ribotide (AIR) in a radical S-adenosyl-L-methionine (SAM)-dependent reaction. This Pseudomonas putida (strain ATCC 700007 / DSM 6899 / JCM 31910 / BCRC 17059 / LMG 24140 / F1) protein is Phosphomethylpyrimidine synthase.